Reading from the N-terminus, the 82-residue chain is MSSLYFAILCLFMIFLVPLHEFGNAQGSEAELQLDPSMCLRVECAKHRNQKWCFCCAGLPRTCFLDKRGCTSVCKRESPSMA.

The first 22 residues, 1–22 (MSSLYFAILCLFMIFLVPLHEF), serve as a signal peptide directing secretion. 4 disulfides stabilise this stretch: C39-C55, C44-C74, C53-C70, and C56-C63.

It belongs to the MEG family. As to expression, expressed in stems, leaves and flowers.

The protein is EMBRYO SURROUNDING FACTOR 1-like protein 10 (ESFL10) of Arabidopsis thaliana (Mouse-ear cress).